Reading from the N-terminus, the 985-residue chain is Rho guanine nucleotide exchange factor 2 (985 aa).

The interval 1-32 (MSRIESLTRARIDRSKEQATKTREKEKMKEAK) is disordered. The Phorbol-ester/DAG-type zinc-finger motif lies at 39 to 86 (GHLFTTISVSGMTMCYACNKSITAKEALICPTCNVTIHNRCKDTLANC). Phosphoserine occurs at positions 109, 122, 129, 133, and 137. Positions 131 to 161 (RQSLLGSRRGLSSLSLAKSVSTTNIAGHFND) are interaction with DYNLT1. Serine 143 carries the phosphoserine; by PAK4 modification. A phosphoserine mark is found at serine 151, serine 163, serine 172, serine 174, and serine 177. The region spanning 236–433 (KKQDVIYELI…KELLSNVDQD (198 aa)) is the DH domain. Lysine 354 carries the post-translational modification N6-acetyllysine. Residues 473–572 (KLIHDGCLLW…WIRVIQQSVR (100 aa)) form the PH domain. Residues 591–615 (LRRIKTKLQQKNQALVELLQMNVEL) are a coiled coil. A phosphoserine mark is found at serine 646 and serine 649. At threonine 680 the chain carries Phosphothreonine; by MAPK1 or MAPK3. 3 positions are modified to phosphoserine: serine 692, serine 710, and serine 781. Threonine 795 is modified (phosphothreonine). Residues 797 to 866 (EKQATELALL…RQLAALGQNE (70 aa)) are a coiled coil. Serine 885 carries the post-translational modification Phosphoserine. Disordered regions lie at residues 890-909 (DALYLSFNPPQPSRGHDRLD) and 918-985 (HRPF…ASES). A Phosphotyrosine modification is found at tyrosine 893. Phosphoserine; by PAK4 is present on serine 895. Residues 919–938 (RPFDDREAQELGSPEDRLQD) show a composition bias toward basic and acidic residues. Residues serine 931, serine 939, and serine 940 each carry the phosphoserine modification. Over residues 940 to 949 (SDPDTCSEEE) the composition is skewed to acidic residues. Threonine 944 is modified (phosphothreonine). A phosphoserine mark is found at serine 946, serine 951, serine 952, serine 955, and serine 959.

In terms of assembly, found in a complex composed at least of ARHGEF2, NOD2 and RIPK2. Interacts with RIPK2; the interaction mediates tyrosine phosphorylation of RIPK2 by Src kinase CSK. Interacts with RIPK1 and RIPK3. Interacts with YWHAZ/14-3-3 zeta; when phosphorylated at Ser-885. Interacts with the kinases PAK4, AURKA and MAPK1. Interacts with RHOA and RAC1. Interacts with NOD1. Interacts (via the N- terminal zinc finger) with CAPN6 (via domain II). Interacts with DYNLT1. Post-translationally, phosphorylation of Ser-885 by PAK1 induces binding to protein YWHAZ, promoting its relocation to microtubules and the inhibition of its activity. Phosphorylated by AURKA and CDK1 during mitosis, which negatively regulates its activity. Phosphorylation by MAPK1 or MAPK3 increases nucleotide exchange activity. Phosphorylation by PAK4 releases GEF-H1 from the microtubules. Phosphorylated on serine, threonine and tyrosine residues in a RIPK2-dependent manner.

The protein localises to the cytoplasm. The protein resides in the cytoskeleton. It localises to the cell junction. It is found in the tight junction. Its subcellular location is the golgi apparatus. The protein localises to the spindle. The protein resides in the cytoplasmic vesicle. Its function is as follows. Activates Rho-GTPases by promoting the exchange of GDP for GTP. May be involved in epithelial barrier permeability, cell motility and polarization, dendritic spine morphology, antigen presentation, leukemic cell differentiation, cell cycle regulation, innate immune response, and cancer. Binds Rac-GTPases, but does not seem to promote nucleotide exchange activity toward Rac-GTPases. May stimulate instead the cortical activity of Rac. Inactive toward CDC42, TC10, or Ras-GTPases. Forms an intracellular sensing system along with NOD1 for the detection of microbial effectors during cell invasion by pathogens. Involved in innate immune signaling transduction pathway promoting cytokine IL6/interleukin-6 and TNF-alpha secretion in macrophage upon stimulation by bacterial peptidoglycans; acts as a signaling intermediate between NOD2 receptor and RIPK2 kinase. Contributes to the tyrosine phosphorylation of RIPK2 through Src tyrosine kinase leading to NF-kappaB activation by NOD2. Overexpression activates Rho-, but not Rac-GTPases, and increases paracellular permeability. Involved in neuronal progenitor cell division and differentiation. Involved in the migration of precerebellar neurons. The protein is Rho guanine nucleotide exchange factor 2 (Arhgef2) of Rattus norvegicus (Rat).